A 75-amino-acid chain; its full sequence is Small ribosomal subunit protein bS16 (75 aa).

The protein belongs to the bacterial ribosomal protein bS16 family.

This chain is Small ribosomal subunit protein bS16, found in Campylobacter hominis (strain ATCC BAA-381 / DSM 21671 / CCUG 45161 / LMG 19568 / NCTC 13146 / CH001A).